A 218-amino-acid chain; its full sequence is Molybdenum cofactor guanylyltransferase (218 aa).

Residues Leu16–Gly18, Lys28, Asn56, Asp74, and Asp109 each bind GTP. Mg(2+) is bound at residue Asp109.

Belongs to the MobA family. As to quaternary structure, monomer. Mg(2+) serves as cofactor.

Its subcellular location is the cytoplasm. The enzyme catalyses Mo-molybdopterin + GTP + H(+) = Mo-molybdopterin guanine dinucleotide + diphosphate. In terms of biological role, transfers a GMP moiety from GTP to Mo-molybdopterin (Mo-MPT) cofactor (Moco or molybdenum cofactor) to form Mo-molybdopterin guanine dinucleotide (Mo-MGD) cofactor. This chain is Molybdenum cofactor guanylyltransferase, found in Sinorhizobium fredii (strain NBRC 101917 / NGR234).